A 307-amino-acid polypeptide reads, in one-letter code: Methionyl-tRNA formyltransferase (307 aa).

Position 108–111 (108–111 (SLLP)) interacts with (6S)-5,6,7,8-tetrahydrofolate.

The protein belongs to the Fmt family.

It carries out the reaction L-methionyl-tRNA(fMet) + (6R)-10-formyltetrahydrofolate = N-formyl-L-methionyl-tRNA(fMet) + (6S)-5,6,7,8-tetrahydrofolate + H(+). Attaches a formyl group to the free amino group of methionyl-tRNA(fMet). The formyl group appears to play a dual role in the initiator identity of N-formylmethionyl-tRNA by promoting its recognition by IF2 and preventing the misappropriation of this tRNA by the elongation apparatus. The protein is Methionyl-tRNA formyltransferase of Xanthomonas oryzae pv. oryzae (strain MAFF 311018).